We begin with the raw amino-acid sequence, 402 residues long: Flagellar hook protein FlgE (402 aa).

It belongs to the flagella basal body rod proteins family.

The protein resides in the bacterial flagellum basal body. The protein is Flagellar hook protein FlgE (flgE) of Escherichia coli (strain K12).